Here is a 213-residue protein sequence, read N- to C-terminus: ATP phosphoribosyltransferase (213 aa).

This sequence belongs to the ATP phosphoribosyltransferase family. Short subfamily. In terms of assembly, heteromultimer composed of HisG and HisZ subunits.

It localises to the cytoplasm. The enzyme catalyses 1-(5-phospho-beta-D-ribosyl)-ATP + diphosphate = 5-phospho-alpha-D-ribose 1-diphosphate + ATP. Its pathway is amino-acid biosynthesis; L-histidine biosynthesis; L-histidine from 5-phospho-alpha-D-ribose 1-diphosphate: step 1/9. Its function is as follows. Catalyzes the condensation of ATP and 5-phosphoribose 1-diphosphate to form N'-(5'-phosphoribosyl)-ATP (PR-ATP). Has a crucial role in the pathway because the rate of histidine biosynthesis seems to be controlled primarily by regulation of HisG enzymatic activity. In Bacillus pumilus (strain SAFR-032), this protein is ATP phosphoribosyltransferase.